A 164-amino-acid polypeptide reads, in one-letter code: Diphosphoinositol polyphosphate phosphohydrolase 3-beta (164 aa).

Residues Arg-9, 17–19, and 38–40 contribute to the substrate site; these read KKR and SSR. A Nudix hydrolase domain is found at 17–144; that stretch reads KKRAACLCFR…VHAEYLQKLK (128 aa). Residues Gly-49 and Glu-65 each contribute to the Mg(2+) site. A Nudix box motif is present at residues 50-71; sequence GGMEPEEEPGGAAVREVFEEAG. Glu-68 functions as the Proton acceptor in the catalytic mechanism. Residue Glu-69 coordinates Mg(2+). Substrate-binding positions include 89–91, Arg-115, and Lys-133; that span reads RKH. A disordered region spans residues 144–164; the sequence is KLGGSPTNGNSVAPSPPEGDP.

It belongs to the Nudix hydrolase family. DIPP subfamily. Mg(2+) is required as a cofactor. Mn(2+) serves as cofactor.

Its subcellular location is the cytoplasm. It carries out the reaction diphospho-myo-inositol polyphosphate + H2O = myo-inositol polyphosphate + phosphate.. The enzyme catalyses P(1),P(6)-bis(5'-adenosyl) hexaphosphate + H2O = adenosine 5'-pentaphosphate + AMP + 2 H(+). It catalyses the reaction P(1),P(5)-bis(5'-adenosyl) pentaphosphate + H2O = adenosine 5'-tetraphosphate + AMP + 2 H(+). Its function is as follows. Cleaves a beta-phosphate from the diphosphate groups in PP-InsP5 (diphosphoinositol pentakisphosphate), suggesting that it may play a role in signal transduction. Also able to catalyze the hydrolysis of dinucleoside oligophosphates, with Ap6A and Ap5A being the preferred substrates. The major reaction products are ADP and p4a from Ap6A and ADP and ATP from Ap5A. Also able to hydrolyze 5-phosphoribose 1-diphosphate. This is Diphosphoinositol polyphosphate phosphohydrolase 3-beta from Bos taurus (Bovine).